The sequence spans 169 residues: Crossover junction endodeoxyribonuclease RuvC (169 aa).

Active-site residues include Asp11, Glu71, and Asp143. Residues Asp11, Glu71, and Asp143 each contribute to the Mg(2+) site.

The protein belongs to the RuvC family. In terms of assembly, homodimer which binds Holliday junction (HJ) DNA. The HJ becomes 2-fold symmetrical on binding to RuvC with unstacked arms; it has a different conformation from HJ DNA in complex with RuvA. In the full resolvosome a probable DNA-RuvA(4)-RuvB(12)-RuvC(2) complex forms which resolves the HJ. It depends on Mg(2+) as a cofactor.

Its subcellular location is the cytoplasm. The enzyme catalyses Endonucleolytic cleavage at a junction such as a reciprocal single-stranded crossover between two homologous DNA duplexes (Holliday junction).. In terms of biological role, the RuvA-RuvB-RuvC complex processes Holliday junction (HJ) DNA during genetic recombination and DNA repair. Endonuclease that resolves HJ intermediates. Cleaves cruciform DNA by making single-stranded nicks across the HJ at symmetrical positions within the homologous arms, yielding a 5'-phosphate and a 3'-hydroxyl group; requires a central core of homology in the junction. The consensus cleavage sequence is 5'-(A/T)TT(C/G)-3'. Cleavage occurs on the 3'-side of the TT dinucleotide at the point of strand exchange. HJ branch migration catalyzed by RuvA-RuvB allows RuvC to scan DNA until it finds its consensus sequence, where it cleaves and resolves the cruciform DNA. The polypeptide is Crossover junction endodeoxyribonuclease RuvC (Rhizobium etli (strain ATCC 51251 / DSM 11541 / JCM 21823 / NBRC 15573 / CFN 42)).